The following is a 115-amino-acid chain: Large ribosomal subunit protein bL19 (115 aa).

It belongs to the bacterial ribosomal protein bL19 family.

Its function is as follows. This protein is located at the 30S-50S ribosomal subunit interface and may play a role in the structure and function of the aminoacyl-tRNA binding site. The protein is Large ribosomal subunit protein bL19 of Citrobacter koseri (strain ATCC BAA-895 / CDC 4225-83 / SGSC4696).